Reading from the N-terminus, the 310-residue chain is Probable cobalamin biosynthesis protein CobD (310 aa).

The next 5 membrane-spanning stretches (helical) occupy residues 53–73 (LVFG…IFFT), 80–100 (LISN…FSIG), 157–177 (DSII…AFIY), 215–235 (IAGI…VPAI), and 289–309 (AVDY…FNLI).

Belongs to the CobD/CbiB family.

It localises to the cell membrane. It participates in cofactor biosynthesis; adenosylcobalamin biosynthesis. Functionally, converts cobyric acid to cobinamide by the addition of aminopropanol on the F carboxylic group. The chain is Probable cobalamin biosynthesis protein CobD from Methanococcus vannielii (strain ATCC 35089 / DSM 1224 / JCM 13029 / OCM 148 / SB).